The chain runs to 447 residues: NADH-quinone oxidoreductase subunit F (447 aa).

Residue 61–70 (GRGGAGFSTG) coordinates NAD(+). Position 174–221 (174–221 (GAGRYICGEETALINSLEGRRANPRAKPPFPAVFGLWGKPTCVNNVET)) interacts with FMN. [4Fe-4S] cluster-binding residues include Cys352, Cys355, Cys358, and Cys399.

This sequence belongs to the complex I 51 kDa subunit family. In terms of assembly, composed of 13 different subunits. Subunits NuoCD, E, F, and G constitute the peripheral sector of the complex. The cofactor is [4Fe-4S] cluster. Requires FMN as cofactor.

The enzyme catalyses a quinone + NADH + 5 H(+)(in) = a quinol + NAD(+) + 4 H(+)(out). In terms of biological role, NDH-1 shuttles electrons from NADH, via FMN and iron-sulfur (Fe-S) centers, to quinones in the respiratory chain. Couples the redox reaction to proton translocation (for every two electrons transferred, four hydrogen ions are translocated across the cytoplasmic membrane), and thus conserves the redox energy in a proton gradient. In Buchnera aphidicola subsp. Schizaphis graminum (strain Sg), this protein is NADH-quinone oxidoreductase subunit F (nuoF).